The primary structure comprises 3011 residues: Genome polyprotein (3011 aa).

S2 bears the N-acetylserine; by host mark. The interval 2–23 (STNPKPQKKNKRNTNRRPQDVK) is interaction with STAT1. An interaction with EIF2AK2/PKR region spans residues 2–58 (STNPKPQKKNKRNTNRRPQDVKFPGGGQIVGGVYLLPRRGPRLGVRATRKTSERSQP). The tract at residues 2-59 (STNPKPQKKNKRNTNRRPQDVKFPGGGQIVGGVYLLPRRGPRLGVRATRKTSERSQPR) is interaction with DDX3X. The disordered stretch occupies residues 2-75 (STNPKPQKKN…PKARRPEGRT (74 aa)). Over 2 to 168 (STNPKPQKKN…EDGVNYATGN (167 aa)) the chain is Cytoplasmic. 2 consecutive short sequence motifs (nuclear localization signal) follow at residues 5 to 13 (PKPQKKNKR) and 38 to 43 (PRRGPR). The segment covering 7–16 (PQKKNKRNTN) has biased composition (basic residues). Low complexity predominate over residues 32-47 (GGVYLLPRRGPRLGVR). Position 53 is a phosphoserine; by host (S53). 2 consecutive short sequence motifs (nuclear localization signal) follow at residues 58–64 (PRGRRQP) and 66–71 (PKARRP). Positions 58 to 68 (PRGRRQPIPKA) are enriched in basic residues. S99 bears the Phosphoserine; by host mark. The segment at 112-152 (PRRRSRNLGKVIDTLTCGFADLMGYIPLVGAPLGGAARALA) is important for endoplasmic reticulum and mitochondrial localization. Residue S116 is modified to Phosphoserine; by host PKA. The interaction with APOA2 stretch occupies residues 122–173 (VIDTLTCGFADLMGYIPLVGAPLGGAARALAHGVRVLEDGVNYATGNLPGCS). The segment at 164–167 (YATG) is important for lipid droplets localization. A helical transmembrane segment spans residues 169–189 (LPGCSFSIFLLALLSCLTVPA). Residues 178–191 (LLALLSCLTVPASA) constitute a propeptide, ER anchor for the core protein, removed in mature form by host signal peptidase. The Lumenal portion of the chain corresponds to 190–358 (SAYQVRNSTG…AGAHWGVLAG (169 aa)). Residues N196, N209, and N234 are each glycosylated (N-linked (GlcNAc...) asparagine; by host). The segment at 265-296 (LVGSATLCSALYVGDLCGSVFLVGQLFTFSPR) is important for fusion. The N-linked (GlcNAc...) asparagine; by host glycan is linked to N305. The helical transmembrane segment at 359 to 379 (IAYFSMVGNWAKVLVVLLLFA) threads the bilayer. Over 380-725 (GVDAETHVTG…WEYVVLLFLL (346 aa)) the chain is Lumenal. Positions 385-411 (THVTGGSAGHTVSGFVSLLAPGAKQNV) are HVR1. 4 N-linked (GlcNAc...) (high mannose) asparagine; by host glycosylation sites follow: N417, N423, N430, and N448. Disulfide bonds link C429–C552, C452–C459, C486–C494, and C503–C508. The segment at 474-480 (YANGSGP) is HVR2. N476 carries an N-linked (GlcNAc...) asparagine; by host glycan. The CD81-binding 1 stretch occupies residues 481-493 (DQRPYCWHYPPKP). N-linked (GlcNAc...) (high mannose) asparagine; by host glycosylation is present at N532. Residues 543–551 (RPPLGNWFG) are CD81-binding 2. An N-linked (GlcNAc...) (high mannose) asparagine; by host glycan is attached at N556. C564 and C569 are joined by a disulfide. Residue N576 is glycosylated (N-linked (GlcNAc...) (high mannose) asparagine; by host). 3 disulfides stabilise this stretch: C581–C585, C597–C620, and C607–C644. Residues N623 and N645 are each glycosylated (N-linked (GlcNAc...) (high mannose) asparagine; by host). C652 and C677 are disulfide-bonded. Residues 660–671 (SELSPLLLTTTQ) are EIF2AK2/eIF2-alpha phosphorylation homology domain (PePHD). A helical transmembrane segment spans residues 726-746 (LADARVCSCLWMMLLISQAEA). At 747 to 757 (ALENLVILNAA) the chain is on the lumenal side. The helical transmembrane segment at 758-778 (SLAGTHGLVSFLVFFCFAWYL) threads the bilayer. The Cytoplasmic portion of the chain corresponds to 779 to 781 (KGK). Residues 782-803 (WVPGAVYTFYGMWPLLLLLLAL) form a helical membrane-spanning segment. Residues 804 to 813 (PQRAYALDTE) lie on the Lumenal side of the membrane. A helical transmembrane segment spans residues 814 to 834 (VAASCGGVVLVGLMALTLSPY). Topologically, residues 835-838 (YKRY) are cytoplasmic. The helical transmembrane segment at 839–859 (ISWCLWWLQYFLTRVEAQLHV) threads the bilayer. Residues 860–881 (WIPPLNVRGGRDAVILLMCAVH) lie on the Lumenal side of the membrane. The helical transmembrane segment at 882–902 (PTLVFDITKLLLAVFGPLWIL) threads the bilayer. The Peptidase C18 domain maps to 899-1026 (LWILQASLLK…GMVSKGWRLL (128 aa)). At 903–1657 (QASLLKVPYF…CMSADLEVVT (755 aa)) the chain is on the cytoplasmic side. The segment at 904–1206 (ASLLKVPYFV…PVENLETTMR (303 aa)) is protease NS2-3. C922 carries S-palmitoyl cysteine; by host lipidation. The tract at residues 929–949 (IGGHYVQMVIIKLGALTGTYV) is interaction with host SCPS1. Active-site for protease NS2 activity; shared with dimeric partner residues include H952, E972, and C993. Residues 1027–1208 (APITAYAQQT…ENLETTMRSP (182 aa)) enclose the Peptidase S29 domain. Residues H1083 and D1107 each act as charge relay system; for serine protease NS3 activity in the active site. The Zn(2+) site is built by C1123 and C1125. S1165 (charge relay system; for serine protease NS3 activity) is an active-site residue. Zn(2+) contacts are provided by C1171 and H1175. Positions 1217-1369 (PVVPQSFQVA…PNIEEVALST (153 aa)) constitute a Helicase ATP-binding domain. Position 1230 to 1237 (1230 to 1237 (APTGSGKS)) interacts with ATP. Mg(2+) contacts are provided by S1237 and E1317. The DECH box motif lies at 1316–1319 (DECH). Positions 1486–1497 (QRRGRTGRGKPG) are RNA-binding. The helical transmembrane segment at 1658-1678 (STWVLVGGVLAALAAYCLSTG) threads the bilayer. The tract at residues 1679-1690 (CVVIVGRVVLSG) is NS3-binding. The Cytoplasmic portion of the chain corresponds to 1679–1805 (CVVIVGRVVL…AVTSPLTTSQ (127 aa)). The helical transmembrane segment at 1806–1826 (TLLFNILGGWVAAQLAAPGAA) threads the bilayer. At 1827–1828 (TA) the chain is on the lumenal side. The helical transmembrane segment at 1829–1849 (FVGAGLAGAAIGSVGLGKVLI) threads the bilayer. The interval 1833–1861 (GLAGAAIGSVGLGKVLIDILAGYGAGVAG) is glycine zipper. Position 1850 (D1850) is a topological domain, cytoplasmic. The helical transmembrane segment at 1851-1871 (ILAGYGAGVAGALVAFKIMSG) threads the bilayer. The Lumenal portion of the chain corresponds to 1872-1881 (EVPSTEDLVN). Residues 1882–1902 (LLPAILSPGALVVGVVCAAIL) traverse the membrane as a helical segment. Residues 1903–1972 (RRHVGPGEGA…WISSECTTPC (70 aa)) lie on the Cytoplasmic side of the membrane. Residues C1968 and C1972 are each lipidated (S-palmitoyl cysteine; by host). An intramembrane segment occupies 1973-2003 (SGSWLRDIWDWICEVLSDFKTWLKAKLMPQL). The interval 1978–1998 (RDIWDWICEVLSDFKTWLKAK) is membrane-binding. At 2004–2990 (PGIPFVSCQR…YHSVSHARPR (987 aa)) the chain is on the cytoplasmic side. Residues 2005 to 2221 (GIPFVSCQRG…KATCTANHDS (217 aa)) are RNA-binding. Zn(2+) is bound by residues C2011, C2029, C2031, and C2052. Positions 2120 to 2208 (EFFTELDGVR…ASSSASQLSA (89 aa)) are FKBP8-binding. The transcriptional activation stretch occupies residues 2120–2332 (EFFTELDGVR…PVPPPRKKRT (213 aa)). An interaction with non-structural protein 4A region spans residues 2135-2139 (PPCKP). The interval 2189 to 2441 (RLARGSPPSV…TPCAAEEQKL (253 aa)) is interaction with host SKP2. The residue at position 2194 (S2194) is a Phosphoserine; by host; in p56. 5 positions are modified to phosphoserine; by host; in p58: S2197, S2201, S2204, S2207, and S2210. An ISDR region spans residues 2206-2245 (LSAPSLKATCTANHDSPDAELIEANLLWRQEMGGNITRVE). Residues 2210-2275 (SLKATCTANH…REISVPAEIL (66 aa)) form an EIF2AK2/PKR-binding region. The interval 2249–2306 (KVVILDSFDPLVAEEDEREISVPAEILRKSRRFAQALPVWARPDYNPPLVETWKKPDY) is NS4B-binding. 2 disordered regions span residues 2312–2334 (HGCPLPPPKSPPVPPPRKKRTVV) and 2351–2408 (SFGS…WSTV). Positions 2315–2326 (PLPPPKSPPVPP) are enriched in pro residues. Phosphoserine; by host is present on S2321. The short motif at 2322 to 2325 (PPVP) is the SH3-binding element. The Nuclear localization signal motif lies at 2326 to 2334 (PPRKKRTVV). Residues 2332-2441 (TVVLTESTLS…TPCAAEEQKL (110 aa)) are interaction with host IFI27. Residues 2351 to 2369 (SFGSSSTSGITGDNTTTSS) are compositionally biased toward low complexity. The tract at residues 2354-2377 (SSSTSGITGDNTTTSSEPAPSGCP) is V3. Phosphoserine; by host occurs at positions 2449 and 2462. The RdRp catalytic domain occupies 2634-2752 (PMGFSYDTRC…ICESAGVQED (119 aa)). Positions 2640, 2738, and 2739 each coordinate Mg(2+). Residues 2991 to 3011 (WIWFCLLLLAAGVGIYLLPNR) traverse the membrane as a helical segment.

Belongs to the hepacivirus polyprotein family. Homooligomer. Interacts with E1 (via C-terminus). Interacts with the non-structural protein 5A. Interacts (via N-terminus) with host STAT1 (via SH2 domain); this interaction results in decreased STAT1 phosphorylation and ubiquitin-mediated proteasome-dependent STAT1 degradation, leading to decreased IFN-stimulated gene transcription. Interacts with host STAT3; this interaction constitutively activates STAT3. Interacts with host LTBR receptor. Interacts with host TNFRSF1A receptor and possibly induces apoptosis. Interacts with host HNRPK. Interacts with host YWHAE. Interacts with host UBE3A/E6AP. Interacts with host DDX3X. Interacts with host APOA2. Interacts with host RXRA protein. Interacts with host SP110 isoform 3/Sp110b; this interaction sequesters the transcriptional corepressor SP110 away from the nucleus. Interacts with host CREB3 nuclear transcription protein; this interaction triggers cell transformation. Interacts with host ACY3. Interacts with host C1QR1. Interacts with host RBM24; this interaction, which enhances the interaction of the mature core protein with 5'-UTR, may inhibit viral translation and favor replication. Interacts with host EIF2AK2/PKR; this interaction induces the autophosphorylation of EIF2AK2. Part of the viral assembly initiation complex composed of NS2, E1, E2, NS3, NS4A, NS5A and the mature core protein. As to quaternary structure, forms a heterodimer with envelope glycoprotein E2. Interacts with mature core protein. Interacts with protease NS2. The heterodimer E1/E2 interacts with host CLDN1; this interaction plays a role in viral entry into host cell. Interacts with host SPSB2 (via C-terminus). Part of the viral assembly initiation complex composed of NS2, E1, E2, NS3, NS4A, NS5A and the mature core protein. Interacts with host NEURL3; this interaction prevents E1 binding to glycoprotein E2. In terms of assembly, forms a heterodimer with envelope glycoprotein E1. Interacts with host CD81 and SCARB1 receptors; these interactions play a role in viral entry into host cell. Interacts with host EIF2AK2/PKR; this interaction inhibits EIF2AK2 and probably allows the virus to evade the innate immune response. Interacts with host CD209/DC-SIGN and CLEC4M/DC-SIGNR. Interact with host SPCS1; this interaction is essential for viral particle assembly. Interacts with protease NS2. The heterodimer E1/E2 interacts with host CLDN1; this interaction plays a role in viral entry into host cell. Part of the viral assembly initiation complex composed of NS2, E1, E2, NS3, NS4A, NS5A and the mature core protein. Interacts with host SLC3A2/4F2hc; the interaction may facilitate viral entry into host cell. Interacts with human PLSCR1. Homohexamer. Homoheptamer. Interacts with protease NS2. As to quaternary structure, homodimer. Interacts with host SPCS1; this interaction is essential for viral particle assembly. Interacts with envelope glycoprotein E1. Interacts with envelope glycoprotein E2. Interacts with viroporin p7. Interacts with serine protease/helicase NS3. Part of the replication complex composed of NS2, NS3, NS4A, NS4B, NS5A and the RNA-directed RNA polymerase embedded in an ER-derived membranous web. Part of the viral assembly initiation complex composed of NS2, E1, E2, NS3, NS4A, NS5A and the mature core protein. In terms of assembly, interacts with protease NS2. Interacts with non-structural protein 4A; this interaction stabilizes the folding of NS3 serine protease. NS3-NS4A interaction is essential for NS3 activation and allows membrane anchorage of the latter. NS3/NS4A complex also prevents phosphorylation of host IRF3, thus preventing the establishment of dsRNA induced antiviral state. Interacts with host MAVS; this interaction leads to the cleavage and inhibition of host MAVS. Interacts with host TICAM1; this interaction leads to the cleavage and inhibition of host TICAM1. Interacts with host TANK-binding kinase/TBK1; this interaction results in the inhibition of the association between TBK1 and IRF3, which leads to the inhibition of IRF3 activation. Interacts with host RBM24. Part of the replication complex composed of NS2, NS3, NS4A, NS4B, NS5A and the RNA-directed RNA polymerase embedded in an ER-derived membranous web. Part of the viral assembly initiation complex composed of NS2, E1, E2, NS3, NS4A, NS5A and the mature core protein. Interacts with NS3 serine protease; this interaction stabilizes the folding of NS3 serine protease. NS3-NS4A interaction is essential for NS3 activation and allows membrane anchorage of the latter. Interacts with non-structural protein 5A (via N-terminus). Part of the replication complex composed of NS2, NS3, NS4A, NS4B, NS5A and the RNA-directed RNA polymerase embedded in an ER-derived membranous web. Part of the viral assembly initiation complex composed of NS2, E1, E2, NS3, NS4A, NS5A and the mature core protein. As to quaternary structure, homomultimer. Interacts with non-structural protein NS5A. Interacts with host PLA2G4C; this interaction likely initiates the recruitment of replication complexes to lipid droplets. Interacts with host STING; this interaction disrupts the interaction between STING and TBK1 thereby suppressing the interferon signaling. Part of the replication complex composed of NS2, NS3, NS4A, NS4B, NS5A and the RNA-directed RNA polymerase embedded in an ER-derived membranous web. In terms of assembly, monomer. Homodimer; dimerization is required for RNA-binding. Interacts with mature core protein. Interacts (via N-terminus) with non-structural protein 4A. Interacts with non-structural protein 4B. Interacts with RNA-directed RNA polymerase. Part of the viral assembly initiation complex composed of NS2, E1, E2, NS3, NS4A, NS5A and the mature core protein. Part of the replication complex composed of NS2, NS3, NS4A, NS4B, NS5A and the RNA-directed RNA polymerase. Interacts with host GRB2. Interacts with host BIN1. Interacts with host PIK3R1. Interacts with host SRCAP. Interacts with host FKBP8. Interacts with host VAPB. Interacts with host EIF2AK2/PKR; this interaction leads to disruption of EIF2AK2 dimerization by NS5A and probably allows the virus to evade the innate immune response. Interacts (via N-terminus) with host PACSIN2 (via N-terminus); this interaction attenuates protein kinase C alpha-mediated phosphorylation of PACSIN2 by disrupting the interaction between PACSIN2 and PRKCA. Interacts (via N-terminus) with host SRC kinase (via SH2 domain). Interacts with most Src-family kinases. Interacts with host IFI27 and SKP2; promotes the ubiquitin-mediated proteasomal degradation of NS5A. Interacts with host GPS2. Interacts with host TNFRSF21; this interaction allows the modulation by the virus of JNK, p38 MAPK, STAT3, and Akt signaling pathways in a DR6-dependent manner. Interacts (via N-terminus) with host CIDEB (via N-terminus); this interaction seems to regulate the association of HCV particles with APOE. Interacts with host CHKA/Choline Kinase-alpha; CHKA bridges host PI4KA and NS5A and potentiates NS5A-stimulated PI4KA activity, which then facilitates the targeting of the ternary complex to the ER for viral replication. Interacts with host SPSB2 (via C-terminus); this interaction targets NS5A for ubiquitination and degradation. Interacts with host RAB18; this interaction may promote the association of NS5A and other replicase components with lipid droplets. Interacts with host TRIM14; this interaction induces the degradation of NS5A. Homooligomer. Interacts with non-structural protein 5A. Interacts with host VAPB. Interacts with host PRK2/PKN2. Interacts with host HNRNPA1 and SEPT6; these interactions facilitate viral replication. Part of the replication complex composed of NS2, NS3, NS4A, NS4B, NS5A and the RNA-directed RNA polymerase. Initiates RNA transcription/replication at a flavin adenine dinucleotide (FAD), resulting in a 5'- FAD cap on viral RNAs. In this way, recognition of viral 5' RNA by host pattern recognition receptors can be bypassed, thereby evading activation of antiviral pathways. Requires Zn(2+) as cofactor. It depends on Mg(2+) as a cofactor. Post-translationally, specific enzymatic cleavages in vivo yield mature proteins. The structural proteins, core, E1, E2 and p7 are produced by proteolytic processing by host signal peptidases. The core protein precursor is synthesized as a 23 kDa protein which is retained in the ER membrane through the hydrophobic signal peptide. Cleavage by the signal peptidase releases the 21 kDa mature core protein. The cleavage of the core protein precursor occurs between aminoacids 176 and 188 but the exact cleavage site is not known. Some degraded forms of the core protein appear as well during the course of infection. The other proteins (p7, NS2, NS3, NS4A, NS4B, NS5A and NS5B) are cleaved by the viral proteases. Autoprocessing between NS2 and NS3 is mediated by the NS2 cysteine protease catalytic domain and regulated by the NS3 N-terminal domain. In terms of processing, phosphorylated by host PKC and PKA. Ubiquitinated; mediated by UBE3A and leading to core protein subsequent proteasomal degradation. Post-translationally, highly N-glycosylated. In terms of processing, palmitoylation is required for NS2/3 autoprocessing and E2 recruitment to membranes. Palmitoylated. This modification may play a role in its polymerization or in protein-protein interactions. Post-translationally, cleaved by host caspases which are probably activated by the viral infection. In terms of processing, ubiquitinated. Ubiquitination, most probably at Lys-2350, mediated by host IFI27 and SKP2 leads to proteasomal degradation, restricting viral infection. Phosphorylated on serines in a basal form termed p56. p58 is a hyperphosphorylated form of p56. p56 and p58 coexist in the cell in roughly equivalent amounts. Hyperphosphorylation is dependent on the presence of NS4A. Host CSNK1A1/CKI-alpha or RPS6KB1 kinases may be responsible for NS5A phosphorylation. Phosphorylated NS5A is involved in viral replication. Post-translationally, tyrosine phosphorylation is essential for the interaction with host SRC. In terms of processing, the N-terminus is phosphorylated by host PRK2/PKN2.

Its subcellular location is the host endoplasmic reticulum membrane. The protein resides in the host mitochondrion membrane. It is found in the virion. The protein localises to the host cytoplasm. It localises to the host nucleus. Its subcellular location is the host lipid droplet. The protein resides in the virion membrane. It is found in the host mitochondrion. The protein localises to the host cell membrane. It localises to the host perinuclear region. The catalysed reaction is Hydrolysis of four peptide bonds in the viral precursor polyprotein, commonly with Asp or Glu in the P6 position, Cys or Thr in P1 and Ser or Ala in P1'.. It catalyses the reaction a ribonucleoside 5'-triphosphate + H2O = a ribonucleoside 5'-diphosphate + phosphate + H(+). The enzyme catalyses ATP + H2O = ADP + phosphate + H(+). It carries out the reaction RNA(n) + a ribonucleoside 5'-triphosphate = RNA(n+1) + diphosphate. With respect to regulation, inhibited by the antiviral drug hexamethylene amiloride. Inhibition by amantadine appears to be genotype-dependent. Also inhibited by long-alkyl-chain iminosugar derivatives. Its activity is regulated as follows. Activity is up-regulated by PRK2/PKN2-mediated phosphorylation. Its function is as follows. Packages viral RNA to form a viral nucleocapsid, and promotes virion budding. Participates in the viral particle production as a result of its interaction with the non-structural protein 5A. Binds RNA and may function as a RNA chaperone to induce the RNA structural rearrangements taking place during virus replication. Modulates viral translation initiation by interacting with viral IRES and 40S ribosomal subunit. Affects various cell signaling pathways, host immunity and lipid metabolism. Prevents the establishment of cellular antiviral state by blocking the interferon-alpha/beta (IFN-alpha/beta) and IFN-gamma signaling pathways and by blocking the formation of phosphorylated STAT1 and promoting ubiquitin-mediated proteasome-dependent degradation of STAT1. Activates STAT3 leading to cellular transformation. Regulates the activity of cellular genes, including c-myc and c-fos. May repress the promoter of p53, and sequester CREB3 and SP110 isoform 3/Sp110b in the cytoplasm. Represses cell cycle negative regulating factor CDKN1A, thereby interrupting an important check point of normal cell cycle regulation. Targets transcription factors involved in the regulation of inflammatory responses and in the immune response: suppresses TNF-induced NF-kappa-B activation, and activates AP-1. Binds to dendritic cells (DCs) via C1QR1, resulting in down-regulation of T-lymphocytes proliferation. Alters lipid metabolism by interacting with hepatocellular proteins involved in lipid accumulation and storage. Induces up-regulation of FAS promoter activity, and thereby contributes to the increased triglyceride accumulation in hepatocytes (steatosis). Forms a heterodimer with envelope glycoprotein E2, which mediates virus attachment to the host cell, virion internalization through clathrin-dependent endocytosis and fusion with host membrane. Fusion with the host cell is most likely mediated by both E1 and E2, through conformational rearrangements of the heterodimer required for fusion rather than a classical class II fusion mechanism. E1/E2 heterodimer binds host apolipoproteins such as APOB and APOE thereby forming a lipo-viro-particle (LVP). APOE associated to the LVP allows the initial virus attachment to cell surface receptors such as the heparan sulfate proteoglycans (HSPGs), syndecan-1 (SDC1), syndecan-1 (SDC2), the low-density lipoprotein receptor (LDLR) and scavenger receptor class B type I (SCARB1). The cholesterol transfer activity of SCARB1 allows E2 exposure and binding of E2 to SCARB1 and the tetraspanin CD81. E1/E2 heterodimer binding on CD81 activates the epithelial growth factor receptor (EGFR) signaling pathway. Diffusion of the complex E1-E2-EGFR-SCARB1-CD81 to the cell lateral membrane allows further interaction with Claudin 1 (CLDN1) and occludin (OCLN) to finally trigger HCV entry. In terms of biological role, forms a heterodimer with envelope glycoprotein E1, which mediates virus attachment to the host cell, virion internalization through clathrin-dependent endocytosis and fusion with host membrane. Fusion with the host cell is most likely mediated by both E1 and E2, through conformational rearrangements of the heterodimer required for fusion rather than a classical class II fusion mechanism. The interaction between envelope glycoprotein E2 and host apolipoprotein E/APOE allows the proper assembly, maturation and infectivity of the viral particles. This interaction is probably promoted via the up-regulation of cellular autophagy by the virus. E1/E2 heterodimer binds host apolipoproteins such as APOB and APOE thereby forming a lipo-viro-particle (LVP). APOE associated to the LVP allows the initial virus attachment to cell surface receptors such as the heparan sulfate proteoglycans (HSPGs), syndecan-1 (SDC1), syndecan-1 (SDC2), the low-density lipoprotein receptor (LDLR) and scavenger receptor class B type I (SCARB1). The cholesterol transfer activity of SCARB1 allows E2 exposure and binding of E2 to SCARB1 and the tetraspanin CD81. E1/E2 heterodimer binding on CD81 activates the epithelial growth factor receptor (EGFR) signaling pathway. Diffusion of the complex E1-E2-EGFR-SCARB1-CD81 to the cell lateral membrane allows further interaction with Claudin 1 (CLDN1) and occludin (OCLN) to finally trigger HCV entry. Inhibits host EIF2AK2/PKR activation, preventing the establishment of an antiviral state. Viral ligand for CD209/DC-SIGN and CLEC4M/DC-SIGNR, which are respectively found on dendritic cells (DCs), and on liver sinusoidal endothelial cells and macrophage-like cells of lymph node sinuses. These interactions allow the capture of circulating HCV particles by these cells and subsequent facilitated transmission to permissive cells such as hepatocytes and lymphocyte subpopulations. The interaction between E2 and host amino acid transporter complex formed by SLC3A2 and SLC7A5/LAT1 may facilitate viral entry into host cell. Functionally, ion channel protein that acts as a viroporin and plays an essential role in the assembly, envelopment and secretion of viral particles. Regulates the host cell secretory pathway, which induces the intracellular retention of viral glycoproteins and favors assembly of viral particles. Creates a pore in acidic organelles and releases Ca(2+) and H(+) in the cytoplasm of infected cells, leading to a productive viral infection. High levels of cytoplasmic Ca(2+) may trigger membrane trafficking and transport of viral ER-associated proteins to viroplasms, sites of viral genome replication. This ionic imbalance induces the assembly of the inflammasome complex, which triggers the maturation of pro-IL-1beta into IL-1beta through the action of caspase-1. Targets also host mitochondria and induces mitochondrial depolarization. In addition of its role as a viroporin, acts as a lipid raft adhesion factor. Its function is as follows. Cysteine protease required for the proteolytic auto-cleavage between the non-structural proteins NS2 and NS3. The N-terminus of NS3 is required for the function of NS2 protease (active region NS2-3). Promotes the initiation of viral particle assembly by mediating the interaction between structural and non-structural proteins. Displays three enzymatic activities: serine protease with a chymotrypsin-like fold, NTPase and RNA helicase. NS3 serine protease, in association with NS4A, is responsible for the cleavages of NS3-NS4A, NS4A-NS4B, NS4B-NS5A and NS5A-NS5B. The NS3/NS4A complex prevents phosphorylation of host IRF3, thus preventing the establishment of dsRNA induced antiviral state. The NS3/NS4A complex induces host amino acid transporter component SLC3A2, thus contributing to HCV propagation. NS3 RNA helicase binds to RNA and unwinds both dsDNA and dsRNA in the 3' to 5' direction, and likely resolves RNA complicated stable secondary structures in the template strand. Binds a single ATP and catalyzes the unzipping of a single base pair of dsRNA. Inhibits host antiviral proteins TBK1 and IRF3 thereby preventing the establishment of an antiviral state. Cleaves host MAVS/CARDIF thereby preventing the establishment of an antiviral state. Cleaves host TICAM1/TRIF, thereby disrupting TLR3 signaling and preventing the establishment of an antiviral state. In terms of biological role, the NS3/NS4A complex prevents phosphorylation of host IRF3, thus preventing the establishment of dsRNA induced antiviral state. The NS3/NS4A complex induces host amino acid transporter component SLC3A2, thus contributing to HCV propagation. Functionally, induces a specific membrane alteration that serves as a scaffold for the virus replication complex. This membrane alteration gives rise to the so-called ER-derived membranous web that contains the replication complex. NS4B self-interaction contributes to its function in membranous web formation. Promotes host TRIF protein degradation in a CASP8-dependent manner thereby inhibiting host TLR3-mediated interferon signaling. Disrupts the interaction between STING and TBK1 contributing to the inhibition of interferon signaling. Its function is as follows. Phosphorylated protein that is indispensable for viral replication and assembly. Both hypo- and hyperphosphorylated states are required for the viral life cycle. The hyperphosphorylated form of NS5A is an inhibitor of viral replication. Involved in RNA-binding and especially in binding to the viral genome. Zinc is essential for RNA-binding. Participates in the viral particle production as a result of its interaction with the mature viral core protein. Its interaction with host VAPB may target the viral replication complex to vesicles. Down-regulates viral IRES translation initiation. Mediates interferon resistance, presumably by interacting with and inhibiting host EIF2AK2/PKR. Prevents BIN1-induced apoptosis. Acts as a transcriptional activator of some host genes important for viral replication when localized in the nucleus. Via the interaction with host PACSIN2, modulates lipid droplet formation in order to promote virion assembly. Modulates TNFRSF21/DR6 signaling pathway for viral propagation. RNA-dependent RNA polymerase that performs primer-template recognition and RNA synthesis during viral replication. Initiates RNA transcription/replication at a flavin adenine dinucleotide (FAD), resulting in a 5'- FAD cap on viral RNAs. In this way, recognition of viral 5' RNA by host pattern recognition receptors can be bypassed, thereby evading activation of antiviral pathways. The chain is Genome polyprotein from Homo sapiens (Human).